Here is a 331-residue protein sequence, read N- to C-terminus: Glycerol-3-phosphate dehydrogenase [NAD(P)+] (331 aa).

NADPH-binding residues include W11, R30, and K105. Positions 105, 134, and 136 each coordinate sn-glycerol 3-phosphate. A138 lines the NADPH pocket. Sn-glycerol 3-phosphate contacts are provided by K189, D242, S252, R253, and N254. K189 (proton acceptor) is an active-site residue. R253 lines the NADPH pocket. NADPH-binding residues include V277 and E279.

Belongs to the NAD-dependent glycerol-3-phosphate dehydrogenase family.

It is found in the cytoplasm. It carries out the reaction sn-glycerol 3-phosphate + NAD(+) = dihydroxyacetone phosphate + NADH + H(+). It catalyses the reaction sn-glycerol 3-phosphate + NADP(+) = dihydroxyacetone phosphate + NADPH + H(+). It participates in membrane lipid metabolism; glycerophospholipid metabolism. In terms of biological role, catalyzes the reduction of the glycolytic intermediate dihydroxyacetone phosphate (DHAP) to sn-glycerol 3-phosphate (G3P), the key precursor for phospholipid synthesis. The protein is Glycerol-3-phosphate dehydrogenase [NAD(P)+] of Herminiimonas arsenicoxydans.